The primary structure comprises 170 residues: MALPGENTKFYETPNHPYQGERIAEESDLLSRYGLKNKEELWRAQSELRDYRREARRLLGQTGTVSGEEFVARLQRIGILSEEERLDDVLSLEVTDVLERRLQTVVYREGLANTMGQARQFVSHGHVTVDGSRVTEPSYTVPVSEENTLAFDETSDLTDELHPARAGAQE.

The region spanning 100–164 (RRLQTVVYRE…SDLTDELHPA (65 aa)) is the S4 RNA-binding domain.

The protein belongs to the universal ribosomal protein uS4 family. In terms of assembly, part of the 30S ribosomal subunit. Contacts protein S5. The interaction surface between S4 and S5 is involved in control of translational fidelity.

Functionally, one of the primary rRNA binding proteins, it binds directly to 16S rRNA where it nucleates assembly of the body of the 30S subunit. In terms of biological role, with S5 and S12 plays an important role in translational accuracy. The chain is Small ribosomal subunit protein uS4 from Halobacterium salinarum (strain ATCC 29341 / DSM 671 / R1).